The following is a 280-amino-acid chain: Nuclear egress protein 1 (280 aa).

Residues 86 to 203 form a CCCH-type zinc finger; it reads CLTLSPYGHS…YIIFTSLTLH (118 aa).

This sequence belongs to the herpesviridae NEC1 protein family. In terms of assembly, forms a heterohexameric complex with NEC2. Interacts with capsid vertex specific component 2/CVC2; this interaction directs the capsid to the host inner nuclear membrane to initiate budding. In terms of processing, phosphorylated at serine residues in the N-terminus. This phosphorylation regulates the localization within the inner nuclear membrane.

Its subcellular location is the host nucleus inner membrane. Plays an essential role in virion nuclear egress, the first step of virion release from infected cell. Within the host nucleus, NEC1 interacts with the newly formed capsid through the vertexes and directs it to the inner nuclear membrane by associating with NEC2. Induces the budding of the capsid at the inner nuclear membrane as well as its envelopment into the perinuclear space. There, the NEC1/NEC2 complex promotes the fusion of the enveloped capsid with the outer nuclear membrane and the subsequent release of the viral capsid into the cytoplasm where it will reach the secondary budding sites in the host Golgi or trans-Golgi network. This is Nuclear egress protein 1 from Alcelaphine herpesvirus 1 (strain C500) (AlHV-1).